The chain runs to 173 residues: Co-chaperone protein HscB (173 aa).

Residues Asp-2–Gln-74 enclose the J domain.

It belongs to the HscB family. In terms of assembly, interacts with HscA and stimulates its ATPase activity. Interacts with IscU.

Functionally, co-chaperone involved in the maturation of iron-sulfur cluster-containing proteins. Seems to help targeting proteins to be folded toward HscA. The protein is Co-chaperone protein HscB of Xenorhabdus nematophila (strain ATCC 19061 / DSM 3370 / CCUG 14189 / LMG 1036 / NCIMB 9965 / AN6).